Here is a 372-residue protein sequence, read N- to C-terminus: Putative glutamate--cysteine ligase 2 (372 aa).

Belongs to the glutamate--cysteine ligase type 2 family. YbdK subfamily. Homodimer.

It carries out the reaction L-cysteine + L-glutamate + ATP = gamma-L-glutamyl-L-cysteine + ADP + phosphate + H(+). Functionally, ATP-dependent carboxylate-amine ligase which exhibits weak glutamate--cysteine ligase activity. This is Putative glutamate--cysteine ligase 2 (ybdK) from Salmonella heidelberg (strain SL476).